Here is a 337-residue protein sequence, read N- to C-terminus: Vacuolar protein sorting-associated protein 26B (337 aa).

The interval 311–337 (SQRFEGTSHPETRPQHSGAAAVEQEQE) is disordered.

The protein belongs to the VPS26 family. Component of the heterotrimeric retromer cargo-selective complex (CSC) which is believed to associate with variable sorting nexins to form functionally distinct retromer complex variants.

Its subcellular location is the cytoplasm. The protein resides in the membrane. It is found in the endosome. In terms of biological role, acts as a component of the retromer cargo-selective complex (CSC). The CSC is believed to be the core functional component of retromer or respective retromer complex variants acting to prevent missorting of selected transmembrane cargo proteins into the lysosomal degradation pathway. Retromer mediates retrograde transport of cargo proteins from endosomes to the trans-Golgi network (TGN). The sequence is that of Vacuolar protein sorting-associated protein 26B (vps26b) from Xenopus tropicalis (Western clawed frog).